A 225-amino-acid polypeptide reads, in one-letter code: PKHD-type hydroxylase YbiX (225 aa).

The region spanning 78–177 is the Fe2OG dioxygenase domain; it reads TLSTPLFNRY…RVASFMWIQS (100 aa). 3 residues coordinate Fe cation: histidine 96, aspartate 98, and histidine 158. Arginine 168 serves as a coordination point for 2-oxoglutarate.

The cofactor is Fe(2+). Requires L-ascorbate as cofactor.

This is PKHD-type hydroxylase YbiX from Escherichia coli O6:H1 (strain CFT073 / ATCC 700928 / UPEC).